The primary structure comprises 613 residues: Na(+)/H(+) antiporter NhaA 1 (613 aa).

Residues 1-24 (MTEASARTIGPLPSRFSRDPKTPR) are disordered. Positions 1–408 (MTEASARTIG…DPARQDEARV (408 aa)) are na(+)/H(+) antiporter NhaA. 11 helical membrane passes run 29–49 (AAAALLLAFTVLAILWANSPW), 81–101 (GLMAFFFFIVGLEVKSEFVIG), 110–130 (AVPVVAAIAGLIVPAVIFLTF), 138–158 (QAWGVVISTDTAFLVGALAVI), 168–188 (IFLLTLAVVDDVGALGAIALF), 191–211 (DDLKLAPLAVAALLIAALAMV), 231–251 (IALYLAHVHPTLAGVAVAVLI), 300–320 (AVGPYVSFVVLPIFALANAGV), 337–357 (WGIVAGLVVGKFVGITAATAL), 377–397 (GGAALSGIGFTISLFIVDVAI), and 408–428 (VGVLIASVLAFTLSWALFRIT). The region spanning 409–613 (GVLIASVLAF…SLIRALEAGR (205 aa)) is the Thioredoxin domain.

It in the N-terminal section; belongs to the NhaA Na(+)/H(+) (TC 2.A.33) antiporter family.

The protein resides in the cell membrane. The enzyme catalyses Na(+)(in) + 2 H(+)(out) = Na(+)(out) + 2 H(+)(in). Functionally, na(+)/H(+) antiporter that extrudes sodium in exchange for external protons. The chain is Na(+)/H(+) antiporter NhaA 1 from Mycobacterium sp. (strain JLS).